The chain runs to 358 residues: Protein-arginine kinase (358 aa).

Residues 24-255 (IVLSSRIRLA…KQLIRQERVA (232 aa)) enclose the Phosphagen kinase C-terminal domain. Residues 27–31 (SSRIR), histidine 92, arginine 126, 177–181 (RASVM), and 208–213 (RGIYGE) each bind ATP. The short motif at 338–343 (RDERRA) is the RDXXRA motif of the pArg binding pocket involved in allosteric regulation element.

Belongs to the ATP:guanido phosphotransferase family.

It carries out the reaction L-arginyl-[protein] + ATP = N(omega)-phospho-L-arginyl-[protein] + ADP + H(+). With respect to regulation, appears to be allosterically activated by the binding of pArg-containing polypeptides to the pArg-binding pocket localized in the C-terminal domain of McsB. Catalyzes the specific phosphorylation of arginine residues in a large number of proteins. Is part of the bacterial stress response system. Protein arginine phosphorylation has a physiologically important role and is involved in the regulation of many critical cellular processes, such as protein homeostasis, motility, competence, and stringent and stress responses, by regulating gene expression and protein activity. The protein is Protein-arginine kinase of Shouchella clausii (strain KSM-K16) (Alkalihalobacillus clausii).